The primary structure comprises 211 residues: Thymidylate kinase (211 aa).

10-17 is an ATP binding site; sequence GPDGAGKT.

Belongs to the thymidylate kinase family.

The catalysed reaction is dTMP + ATP = dTDP + ADP. In terms of biological role, phosphorylation of dTMP to form dTDP in both de novo and salvage pathways of dTTP synthesis. This is Thymidylate kinase (tmk) from Lactococcus lactis subsp. lactis (strain IL1403) (Streptococcus lactis).